The following is a 421-amino-acid chain: Signal recognition particle receptor FtsY (421 aa).

Residues 228 to 235 (GINGAGKT), 309 to 313 (DTAGR), and 373 to 376 (TKLD) each bind GTP.

The protein belongs to the GTP-binding SRP family. FtsY subfamily. Part of the signal recognition particle protein translocation system, which is composed of SRP and FtsY. SRP is a ribonucleoprotein composed of Ffh and a 4.5S RNA molecule.

Its subcellular location is the cell inner membrane. It is found in the cytoplasm. It carries out the reaction GTP + H2O = GDP + phosphate + H(+). In terms of biological role, involved in targeting and insertion of nascent membrane proteins into the cytoplasmic membrane. Acts as a receptor for the complex formed by the signal recognition particle (SRP) and the ribosome-nascent chain (RNC). Interaction with SRP-RNC leads to the transfer of the RNC complex to the Sec translocase for insertion into the membrane, the hydrolysis of GTP by both Ffh and FtsY, and the dissociation of the SRP-FtsY complex into the individual components. The chain is Signal recognition particle receptor FtsY from Neisseria meningitidis serogroup B (strain ATCC BAA-335 / MC58).